Here is a 970-residue protein sequence, read N- to C-terminus: mRNA-decapping enzyme subunit 2 (970 aa).

The Nudix hydrolase domain occupies 101–228; the sequence is KSIPVRGAAI…IKYYLINSMM (128 aa). The residue at position 116 (S116) is a Phosphoserine. Residues 134 to 155 carry the Nudix box motif; it reads GKISKDENDIDCCIREVKEEIG. 2 residues coordinate Mn(2+): E149 and E153. 3 disordered regions span residues 287–341, 417–465, and 499–692; these read NNAV…ANNK, AVSQ…PKLK, and PTSS…LSST. The segment covering 300–314 has biased composition (basic and acidic residues); the sequence is EHQHLKEQSGEHNQQ. Positions 315-334 are enriched in low complexity; that stretch reads KDQQSSFSSQQQPSIFPSLS. Position 439 is a phosphoserine (S439). Positions 499–522 are enriched in polar residues; the sequence is PTSSQKTHASKPDTSFLPNDSVSG. A compositionally biased stretch (acidic residues) spans 526 to 539; the sequence is AEYEDFESSSDEEV. The segment covering 560–576 has biased composition (basic and acidic residues); it reads SEKDSRRSQKEKPRSDA. Over residues 577–590 the composition is skewed to polar residues; that stretch reads NKTNLNASAESNSV. The span at 596–608 shows a compositional bias: low complexity; sequence KSSPSTQSKQNSS. A compositionally biased stretch (acidic residues) spans 625 to 637; it reads DAYEVFESSSDEE. A Phosphothreonine modification is found at T677. The segment covering 677 to 691 has biased composition (polar residues); sequence TESNKSINETVGLSS. S679, S682, S751, S771, S773, and S778 each carry phosphoserine. Positions 831 to 862 are disordered; sequence LKKNNSTGYPRTEGGPSSEMPTSMKRNDATNN.

The protein belongs to the Nudix hydrolase family. DCP2 subfamily. As to quaternary structure, component of the decapping complex composed of DCP1 and DCP2. Interacts with mRNA, LSM2, LSM4 and LSM8. It depends on Mn(2+) as a cofactor.

The protein localises to the cytoplasm. It localises to the P-body. Functionally, catalytic component of the decapping complex necessary for the degradation of mRNAs, both in normal mRNA turnover and in nonsense-mediated mRNA decay. Removes the 7-methyl guanine cap structure from mRNA molecules, yielding a 5'-phosphorylated mRNA fragment and 7m-GDP. Decapping is the major pathway of mRNA degradation in yeast. It occurs through deadenylation, decapping and subsequent 5' to 3' exonucleolytic decay of the transcript body. This chain is mRNA-decapping enzyme subunit 2 (DCP2), found in Saccharomyces cerevisiae (strain YJM789) (Baker's yeast).